The primary structure comprises 379 residues: Intracellular hyaluronan-binding protein 4.S (379 aa).

Disordered stretches follow at residues 52–260 and 332–379; these read THRK…FSQE and SLAR…PALA. Over residues 71-81 the composition is skewed to basic and acidic residues; that stretch reads GKKESQKDRKA. The span at 107 to 116 shows a compositional bias: polar residues; sequence KVTQNENVDS. 2 stretches are compositionally biased toward basic and acidic residues: residues 118–133 and 139–158; these read VKVD…REVR and RSAE…DKQM. The span at 162–174 shows a compositional bias: gly residues; the sequence is GGRGGMRGRGRGG. A compositionally biased stretch (basic and acidic residues) spans 179–208; that stretch reads TESDNLRGKREFDRHSGSDRARMRPEDKRG. Acidic residues-rich tracts occupy residues 232 to 241 and 368 to 379; these read EQVETTETEA and NPDDPEDFPALA.

Belongs to the SERBP1-HABP4 family. In terms of assembly, associates with ribosomes; promoting ribosome stabilization. Interacts with eef2/eEF2; promoting ribosome stabilization.

It localises to the nucleus. It is found in the cytoplasm. The protein localises to the stress granule. Its subcellular location is the nucleolus. The protein resides in the nucleus speckle. It localises to the cajal body. Functionally, ribosome-binding protein that promotes ribosome hibernation, a process during which ribosomes are stabilized in an inactive state and preserved from proteasomal degradation. Acts via its association with eef2/eEF2 factor at the A-site of the ribosome, promoting ribosome stabilization in an inactive state compatible with storage. Plays a key role in ribosome hibernation in the mature egg by promoting ribosome stabilization. Ribosomes, which are produced in large quantities during oogenesis, are stored and translationally repressed in the egg and early embryo. This chain is Intracellular hyaluronan-binding protein 4.S, found in Xenopus laevis (African clawed frog).